The sequence spans 185 residues: Ion-translocating oxidoreductase complex subunit B (185 aa).

The interval 1 to 26 (MNHILLIILIFAALALIFGLLLGFAA) is hydrophobic. A 4Fe-4S domain is found at 32 to 90 (ESDPIVDQLDALLPQTQCGQCGYPGCRPYAEAIANGDSINKCVPGGAQTIQNIADLMGV). Residues cysteine 49, cysteine 52, cysteine 57, cysteine 73, cysteine 115, cysteine 118, cysteine 121, cysteine 125, cysteine 145, cysteine 148, cysteine 151, and cysteine 155 each coordinate [4Fe-4S] cluster. 4Fe-4S ferredoxin-type domains follow at residues 106 to 135 (RVAF…GAPK) and 136 to 165 (LMHT…MIEL).

This sequence belongs to the 4Fe4S bacterial-type ferredoxin family. RnfB subfamily. The complex is composed of six subunits: RnfA, RnfB, RnfC, RnfD, RnfE and RnfG. [4Fe-4S] cluster is required as a cofactor.

Its subcellular location is the cell inner membrane. Its function is as follows. Part of a membrane-bound complex that couples electron transfer with translocation of ions across the membrane. In Tolumonas auensis (strain DSM 9187 / NBRC 110442 / TA 4), this protein is Ion-translocating oxidoreductase complex subunit B.